Here is a 512-residue protein sequence, read N- to C-terminus: Aldehyde dehydrogenase B (512 aa).

Residues E268 and C307 contribute to the active site.

Homotetramer.

It carries out the reaction an aldehyde + NADP(+) + H2O = a carboxylate + NADPH + 2 H(+). The catalysed reaction is acetaldehyde + NADP(+) + H2O = acetate + NADPH + 2 H(+). The enzyme catalyses chloroacetaldehyde + NADP(+) + H2O = chloroacetate + NADPH + 2 H(+). It catalyses the reaction propanal + NADP(+) + H2O = propanoate + NADPH + 2 H(+). Its activity is regulated as follows. Magnesium increases enzyme activity with various substrates. Its function is as follows. Catalyzes the NADP(+)-dependent oxidation of diverse aldehydes to their corresponding carboxylic acids, with a preference for acetaldehyde and chloroacetaldehyde. May play a role in detoxifying aldehydes present during stationary phase. Cannot use NAD(+) instead of NADP(+) as the electron acceptor. To a lesser extent is also able to oxidize propionaldehyde (propanal), benzaldehyde, mafosfamide, and 4-hydroperoxycyclophosphamide. Does not use either glyceraldehyde or glycolaldehyde as substrates. This chain is Aldehyde dehydrogenase B, found in Escherichia coli (strain K12).